A 389-amino-acid polypeptide reads, in one-letter code: Succinate--CoA ligase [ADP-forming] subunit beta (389 aa).

ATP is bound by residues lysine 46, 53–55, glutamate 99, cysteine 102, and glutamate 107; that span reads GRG. Mg(2+) is bound by residues asparagine 199 and aspartate 213. Substrate contacts are provided by residues asparagine 264 and 321–323; that span reads GIV.

It belongs to the succinate/malate CoA ligase beta subunit family. In terms of assembly, heterotetramer of two alpha and two beta subunits. Requires Mg(2+) as cofactor.

The enzyme catalyses succinate + ATP + CoA = succinyl-CoA + ADP + phosphate. The catalysed reaction is GTP + succinate + CoA = succinyl-CoA + GDP + phosphate. Its pathway is carbohydrate metabolism; tricarboxylic acid cycle; succinate from succinyl-CoA (ligase route): step 1/1. Functionally, succinyl-CoA synthetase functions in the citric acid cycle (TCA), coupling the hydrolysis of succinyl-CoA to the synthesis of either ATP or GTP and thus represents the only step of substrate-level phosphorylation in the TCA. The beta subunit provides nucleotide specificity of the enzyme and binds the substrate succinate, while the binding sites for coenzyme A and phosphate are found in the alpha subunit. The polypeptide is Succinate--CoA ligase [ADP-forming] subunit beta (Haemophilus influenzae (strain 86-028NP)).